We begin with the raw amino-acid sequence, 409 residues long: Elongation factor Tu, chloroplastic (409 aa).

The 205-residue stretch at 10–214 folds into the tr-type G domain; that stretch reads KPHVNIGTIG…NVDSYIPTPA (205 aa). The tract at residues 19-26 is G1; it reads GHVDHGKT. Residue 19-26 participates in GTP binding; it reads GHVDHGKT. Threonine 26 serves as a coordination point for Mg(2+). Residues 60 to 64 are G2; sequence GITIN. Residues 81-84 are G3; the sequence is DCPG. Residues 81–85 and 136–139 contribute to the GTP site; these read DCPGH and NKED. The tract at residues 136-139 is G4; sequence NKED. Residues 174-176 form a G5 region; that stretch reads SAL.

The protein belongs to the TRAFAC class translation factor GTPase superfamily. Classic translation factor GTPase family. EF-Tu/EF-1A subfamily.

The protein localises to the plastid. It localises to the chloroplast. The enzyme catalyses GTP + H2O = GDP + phosphate + H(+). Functionally, GTP hydrolase that promotes the GTP-dependent binding of aminoacyl-tRNA to the A-site of ribosomes during protein biosynthesis. In Ostreococcus tauri, this protein is Elongation factor Tu, chloroplastic (tufA).